A 269-amino-acid polypeptide reads, in one-letter code: MSQQNGNVNRVGAQDRVGASGGMEHSFGFKAVDENEKQGLVNDVFHKVAKRYDIMNDLMSAGMHRVWKDAMVAWLTPSKRPGWTSLDVAGGTGDIAFRIVEVSGRQAHVTILDINGSMLGVGRERAIKKGLIDNLEFVEANAEELPFEDNSFDAYTIAFGIRNVPHIDKALSEAYRVLKPGGRFLCLEFSEVELPVLDKVYDEWSFRAIPRIGKMITGDADSYSYLVESIRKFPKQQDFAAMIEKAGFERVSYRNFTGGIAALHSGWKL.

Residues Thr92, Asp113, and 141 to 142 (NA) each bind S-adenosyl-L-methionine.

This sequence belongs to the class I-like SAM-binding methyltransferase superfamily. MenG/UbiE family.

The enzyme catalyses a 2-demethylmenaquinol + S-adenosyl-L-methionine = a menaquinol + S-adenosyl-L-homocysteine + H(+). The catalysed reaction is a 2-methoxy-6-(all-trans-polyprenyl)benzene-1,4-diol + S-adenosyl-L-methionine = a 5-methoxy-2-methyl-3-(all-trans-polyprenyl)benzene-1,4-diol + S-adenosyl-L-homocysteine + H(+). The protein operates within quinol/quinone metabolism; menaquinone biosynthesis; menaquinol from 1,4-dihydroxy-2-naphthoate: step 2/2. It participates in cofactor biosynthesis; ubiquinone biosynthesis. In terms of biological role, methyltransferase required for the conversion of demethylmenaquinol (DMKH2) to menaquinol (MKH2) and the conversion of 2-polyprenyl-6-methoxy-1,4-benzoquinol (DDMQH2) to 2-polyprenyl-3-methyl-6-methoxy-1,4-benzoquinol (DMQH2). The protein is Ubiquinone/menaquinone biosynthesis C-methyltransferase UbiE of Brucella suis biovar 1 (strain 1330).